We begin with the raw amino-acid sequence, 315 residues long: tRNA dimethylallyltransferase (315 aa).

13 to 20 provides a ligand contact to ATP; the sequence is GPTASGKT. 15-20 contributes to the substrate binding site; the sequence is TASGKT. Interaction with substrate tRNA stretches follow at residues 38 to 41, 162 to 166, 243 to 248, and 276 to 283; these read DSAL, QRLSR, RCVGYR, and KRQITWLR.

The protein belongs to the IPP transferase family. Monomer. Requires Mg(2+) as cofactor.

The catalysed reaction is adenosine(37) in tRNA + dimethylallyl diphosphate = N(6)-dimethylallyladenosine(37) in tRNA + diphosphate. Catalyzes the transfer of a dimethylallyl group onto the adenine at position 37 in tRNAs that read codons beginning with uridine, leading to the formation of N6-(dimethylallyl)adenosine (i(6)A). This chain is tRNA dimethylallyltransferase, found in Vibrio vulnificus (strain YJ016).